Consider the following 298-residue polypeptide: Putative F-box and FNIP repeat-containing protein R286 (298 aa).

The F-box domain occupies 4–48 (LNVLESHVILHIIEFLPDHEKIKFMSTCKSLYEFRCHVTYNNFYV). FNIP repeat units lie at residues 124–165 (FNKP…LGHN) and 255–297 (WNFD…FISR).

This Acanthamoeba polyphaga (Amoeba) protein is Putative F-box and FNIP repeat-containing protein R286.